Reading from the N-terminus, the 260-residue chain is Cell wall synthesis protein Wag31 (260 aa).

Residues phenylalanine 31 to glycine 64 are a coiled coil. Threonine 73 is modified (phosphothreonine). Residues methionine 161 to glycine 196 are a coiled coil. The disordered stretch occupies residues glutamate 233–asparagine 260.

The protein belongs to the DivIVA family. Forms homooligomers. Post-translationally, phosphorylated by PknA. Phosphorylation enhances polar localization, which in turn heightens polar peptidoglycan biosynthesis.

It localises to the cytoplasm. In terms of biological role, important for maintaining cell shape and cell wall integrity by localizing peptidoglycan synthesis to the cell poles. This chain is Cell wall synthesis protein Wag31 (wag31), found in Mycobacterium tuberculosis (strain CDC 1551 / Oshkosh).